We begin with the raw amino-acid sequence, 335 residues long: Large ribosomal subunit protein uL3 (335 aa).

3 disordered regions span residues 1–35 (MPQP…ADDG), 234–256 (IGNL…GQTG), and 312–335 (AVRP…SNQG). Positions 244–256 (RVRSTVPQQGQTG) are enriched in polar residues.

The protein belongs to the universal ribosomal protein uL3 family. As to quaternary structure, part of the 50S ribosomal subunit. Forms a cluster with proteins L14 and L24e.

In terms of biological role, one of the primary rRNA binding proteins, it binds directly near the 3'-end of the 23S rRNA, where it nucleates assembly of the 50S subunit. The polypeptide is Large ribosomal subunit protein uL3 (Halobacterium salinarum (strain ATCC 29341 / DSM 671 / R1)).